A 942-amino-acid polypeptide reads, in one-letter code: Replicase polyprotein P2AB (942 aa).

The next 2 helical transmembrane spans lie at 10–30 (KSVMLMSRMSWSKLALLISVA) and 41–61 (TLICMGILVSVVLNWIVCAVC). A Peptidase S39 domain is found at 129-326 (VENSRLQPLE…TVENSELYPD (198 aa)). Catalysis depends on for protease activity residues histidine 176, aspartate 209, and serine 276. Residue threonine 339 is modified to Phosphothreonine; by host. The residue at position 390 (serine 390) is a Phosphoserine; by host. The RdRp catalytic domain occupies 691–805 (HPGAMADISG…GWVDDAPRKY (115 aa)). Positions 888–917 (GNDGEERSSNESPATTKTQGSAAAWGPPQE) are disordered. Over residues 897 to 908 (NESPATTKTQGS) the composition is skewed to polar residues.

In terms of processing, the polyprotein is proteolytically cleaved into several chains by the viral protease.

The protein localises to the host membrane. It carries out the reaction RNA(n) + a ribonucleoside 5'-triphosphate = RNA(n+1) + diphosphate. In terms of biological role, responsible for cleavage of polyprotein P2A and replicase polyprotein P2AB. Covalently attached to the 5' extremity of the genomic and subgenomic RNAs. It may serve as a primer for the replicase. Functionally, replicates the viral genome. In Dactylis glomerata (Orchard grass), this protein is Replicase polyprotein P2AB.